We begin with the raw amino-acid sequence, 596 residues long: UDP-glucuronate:xylan alpha-glucuronosyltransferase 2 (596 aa).

The helical; Signal-anchor for type II membrane protein transmembrane segment at 17–37 (LIRFNLVLLGFSFLLYTAIFF) threads the bilayer. Residues D395 and D397 each contribute to the Mn(2+) site. Substrate is bound by residues 395 to 397 (DAD), 424 to 426 (NSG), 451 to 455 (NGGDQ), and 504 to 509 (HYLGWK). H504 provides a ligand contact to Mn(2+).

Belongs to the glycosyltransferase 8 family. Glycogenin subfamily. Mn(2+) is required as a cofactor.

The protein localises to the golgi apparatus membrane. Functionally, glycosyltransferase required for the addition of both glucuronic acid and 4-O-methylglucuronic acid branches to xylan in stem cell walls. In association with GUX1, is responsible for almost all of the substitutions of the xylan backbone in stem glucuronoxylan. This chain is UDP-glucuronate:xylan alpha-glucuronosyltransferase 2 (GUX2), found in Arabidopsis thaliana (Mouse-ear cress).